A 136-amino-acid polypeptide reads, in one-letter code: Putative nickel-responsive regulator (136 aa).

Ni(2+) is bound by residues His-76, His-87, His-89, and Cys-95.

This sequence belongs to the transcriptional regulatory CopG/NikR family. Ni(2+) is required as a cofactor.

Functionally, transcriptional regulator. This is Putative nickel-responsive regulator from Desulfotalea psychrophila (strain LSv54 / DSM 12343).